Here is a 65-residue protein sequence, read N- to C-terminus: Small ribosomal subunit protein bS21 (65 aa).

The protein belongs to the bacterial ribosomal protein bS21 family.

In Chlorobaculum parvum (strain DSM 263 / NCIMB 8327) (Chlorobium vibrioforme subsp. thiosulfatophilum), this protein is Small ribosomal subunit protein bS21.